Consider the following 393-residue polypeptide: Cobalt-precorrin-5B C(1)-methyltransferase (393 aa).

The interval 1 to 35 (MSDETRVGEAAEQAATPEKIRKGSARRERGNRTGF) is disordered. A compositionally biased stretch (basic and acidic residues) spans 18-31 (EKIRKGSARRERGN).

The protein belongs to the CbiD family.

It carries out the reaction Co-precorrin-5B + S-adenosyl-L-methionine = Co-precorrin-6A + S-adenosyl-L-homocysteine. It participates in cofactor biosynthesis; adenosylcobalamin biosynthesis; cob(II)yrinate a,c-diamide from sirohydrochlorin (anaerobic route): step 6/10. In terms of biological role, catalyzes the methylation of C-1 in cobalt-precorrin-5B to form cobalt-precorrin-6A. This Dechloromonas aromatica (strain RCB) protein is Cobalt-precorrin-5B C(1)-methyltransferase.